The sequence spans 276 residues: Malectin-B (276 aa).

The first 26 residues, 1–26, serve as a signal peptide directing secretion; that stretch reads MLSIRTVLGPLAAILLTVIGPFGAHG. The Lumenal portion of the chain corresponds to 27 to 253; it reads SGLADKVMWA…TPNPYASDNS (227 aa). Tyrosine 67, tyrosine 89, tyrosine 116, phenylalanine 117, and aspartate 186 together coordinate a carbohydrate. The tract at residues 202–249 is disordered; that stretch reads DVPQLQPHPGLEKKEEEEEEEEEEGSPSKKQSNKNRVQSGPRTPNPYA. Positions 216 to 226 are enriched in acidic residues; sequence EEEEEEEEEEG. Polar residues predominate over residues 229-249; the sequence is SKKQSNKNRVQSGPRTPNPYA. A glycan (N-linked (GlcNAc...) asparagine) is linked at asparagine 252. A helical membrane pass occupies residues 254–274; it reads SLMFPILVAFGVFIPTLFCLC. At 275–276 the chain is on the cytoplasmic side; the sequence is RL.

This sequence belongs to the malectin family.

It is found in the endoplasmic reticulum membrane. Functionally, carbohydrate-binding protein with a strong ligand preference for Glc2-N-glycan. May play a role in the early steps of protein N-glycosylation. Can bind di- or higher oligomers but not monomers of glucose, including maltose, maltotriose, maltotetraose, maltoheptaose, nigerose, kojibose, cellobiose and isomaltose, although based on their subcellular locations, these are unlikely to all be physiological ligands. The protein is Malectin-B of Xenopus laevis (African clawed frog).